The sequence spans 228 residues: Octanoyltransferase (228 aa).

Residues 31-212 enclose the BPL/LPL catalytic domain; sequence EETDGILILL…KFEEVFEIKF (182 aa). Substrate is bound by residues 76-83, 143-145, and 156-158; these read RGGKITFH, AIG, and GIA. The Acyl-thioester intermediate role is filled by cysteine 174.

The protein belongs to the LipB family.

Its subcellular location is the cytoplasm. The enzyme catalyses octanoyl-[ACP] + L-lysyl-[protein] = N(6)-octanoyl-L-lysyl-[protein] + holo-[ACP] + H(+). It functions in the pathway protein modification; protein lipoylation via endogenous pathway; protein N(6)-(lipoyl)lysine from octanoyl-[acyl-carrier-protein]: step 1/2. Its function is as follows. Catalyzes the transfer of endogenously produced octanoic acid from octanoyl-acyl-carrier-protein onto the lipoyl domains of lipoate-dependent enzymes. Lipoyl-ACP can also act as a substrate although octanoyl-ACP is likely to be the physiological substrate. The sequence is that of Octanoyltransferase from Caldanaerobacter subterraneus subsp. tengcongensis (strain DSM 15242 / JCM 11007 / NBRC 100824 / MB4) (Thermoanaerobacter tengcongensis).